The primary structure comprises 144 residues: HTH-type transcriptional repressor NsrR (144 aa).

Residues 2 to 129 enclose the HTH rrf2-type domain; it reads QLTSFTDYGL…DKHTLLSLID (128 aa). The segment at residues 28–51 is a DNA-binding region (H-T-H motif); sequence ISKVTEVYGVSRNHMVKIINKLGQ. Positions 91, 96, and 102 each coordinate [2Fe-2S] cluster.

[2Fe-2S] cluster is required as a cofactor.

In terms of biological role, nitric oxide-sensitive repressor of genes involved in protecting the cell against nitrosative stress. May require iron for activity. This Photobacterium profundum (strain SS9) protein is HTH-type transcriptional repressor NsrR.